The sequence spans 455 residues: P2X purinoceptor 5 (455 aa).

Residues 1-34 (MGQAAWKGFVLSLFDYKTAKFVVAKSKKVGLLYR) lie on the Cytoplasmic side of the membrane. A helical membrane pass occupies residues 35–55 (VLQLIILLYLLIWVFLIKKSY). Over 56 to 341 (QDIDTSLQSA…SIIPTVINIG (286 aa)) the chain is Extracellular. Residues K69 and K71 each contribute to the ATP site. N-linked (GlcNAc...) asparagine glycosylation is present at N77. Cystine bridges form between C118-C169, C129-C152, and C135-C163. N157 carries an N-linked (GlcNAc...) asparagine glycan. T189 lines the ATP pocket. N202 carries an N-linked (GlcNAc...) asparagine glycan. 2 disulfides stabilise this stretch: C220–C229 and C263–C272. The ATP site is built by N294, R296, and K314. Residues 342-362 (SGLALMGAGAFFCDLVLIYLI) form a helical membrane-spanning segment. Residues 363–455 (RKSEFYRDKK…QSQILHPVKT (93 aa)) lie on the Cytoplasmic side of the membrane. Over residues 384 to 401 (NVEVEANEMEQERPEDEP) the composition is skewed to acidic residues. The segment at 384 to 422 (NVEVEANEMEQERPEDEPLERVRQDEQSQELAQSGRKQN) is disordered. Over residues 412–422 (QELAQSGRKQN) the composition is skewed to polar residues.

The protein belongs to the P2X receptor family. In terms of assembly, functional P2XRs are organized as homomeric and heteromeric trimers. Homotrimer. Forms heterotrimer with P2RX1. Predominantly expressed in heart but are also present in brain, spinal cord and adrenal gland.

The protein resides in the cell membrane. It carries out the reaction Na(+)(in) = Na(+)(out). It catalyses the reaction Ca(2+)(in) = Ca(2+)(out). The enzyme catalyses chloride(in) = chloride(out). Activated by ATP. Slowly desensitizing. Not activated by ATP agonist alpha/beta-methylene-ATP. Highly sensitive to the antagonists suramin and PPADS. Functionally, ATP-gated nonselective transmembrane cation channel. Permeable to potassium, sodium and calcium. Unlike other P2RX receptors, the P2X5 receptor is also permeable to chloride. Acts as an important regulator of inflammatory-related bone loss and osteoclast multinucleation. The protein is P2X purinoceptor 5 (P2rx5) of Rattus norvegicus (Rat).